Reading from the N-terminus, the 393-residue chain is tRNA(Met) cytidine acetate ligase (393 aa).

Positions 81, 142, and 167 each coordinate ATP.

It belongs to the TmcAL family.

It is found in the cytoplasm. The enzyme catalyses cytidine(34) in elongator tRNA(Met) + acetate + ATP = N(4)-acetylcytidine(34) in elongator tRNA(Met) + AMP + diphosphate. Functionally, catalyzes the formation of N(4)-acetylcytidine (ac(4)C) at the wobble position of elongator tRNA(Met), using acetate and ATP as substrates. First activates an acetate ion to form acetyladenylate (Ac-AMP) and then transfers the acetyl group to tRNA to form ac(4)C34. The protein is tRNA(Met) cytidine acetate ligase of Bacillus thuringiensis (strain Al Hakam).